Here is a 267-residue protein sequence, read N- to C-terminus: Rhomboid-type serine protease 2 (267 aa).

6 consecutive transmembrane segments (helical) span residues 20–40, 67–87, 99–119, 126–146, 155–179, and 185–206; these read LPLF…ASLQ, FPLI…LTPL, TSLA…YVLI, ANHG…MESI, FVIG…AALI, and LGHL…KLLA. The active-site Nucleophile is S134. Residue H187 is part of the active site. Residues 247-267 form a disordered region; it reads RPGPSGSAATELVGTTQRLGP.

Belongs to the peptidase S54 family.

The protein localises to the golgi apparatus membrane. It localises to the golgi apparatus. Its subcellular location is the cis-Golgi network membrane. The enzyme catalyses Cleaves type-1 transmembrane domains using a catalytic dyad composed of serine and histidine that are contributed by different transmembrane domains.. Its function is as follows. Probable rhomboid-type serine protease that catalyzes intramembrane proteolysis. The chain is Rhomboid-type serine protease 2 (RBD2) from Gibberella zeae (strain ATCC MYA-4620 / CBS 123657 / FGSC 9075 / NRRL 31084 / PH-1) (Wheat head blight fungus).